The chain runs to 350 residues: FAD:protein FMN transferase (350 aa).

Residues 1-19 (MKMTFCRAVCLAAAFLLMG) form the signal peptide. A lipid anchor (N-palmitoyl cysteine) is attached at cysteine 20. Cysteine 20 is lipidated: S-diacylglycerol cysteine. Residues methionine 41, tyrosine 78, 119–121 (AMD), and aspartate 181 each bind FAD. Threonine 184 contacts Mg(2+). FAD is bound by residues glutamate 187 and isoleucine 272. Mg(2+) contacts are provided by aspartate 298, aspartate 301, and threonine 302.

It belongs to the ApbE family. Homodimer. Mg(2+) serves as cofactor.

It is found in the cell inner membrane. It catalyses the reaction L-threonyl-[protein] + FAD = FMN-L-threonyl-[protein] + AMP + H(+). In terms of biological role, flavin transferase that catalyzes the transfer of the FMN moiety of FAD and its covalent binding to the hydroxyl group of a threonine residue in a target flavoprotein such as NqrB and NqrC, two subunits of the NQR complex. This Salmonella typhimurium (strain LT2 / SGSC1412 / ATCC 700720) protein is FAD:protein FMN transferase.